Reading from the N-terminus, the 439-residue chain is uncharacterized protein (439 aa).

CBS domains are found at residues 195–254 and 256–314; these read LTPA…SIEK and MTKN…KQPQ.

This is an uncharacterized protein from Bacillus subtilis (strain 168).